The chain runs to 367 residues: Ribosomal lysine N-methyltransferase 5 (367 aa).

The tract at residues 55–74 (EGGRKKKRVRRRNKASSVEE) is disordered. Over residues 58–68 (RKKKRVRRRNK) the composition is skewed to basic residues. Residues W110, 170 to 172 (GAG), D192, W256, and M288 each bind S-adenosyl-L-methionine.

Belongs to the class I-like SAM-binding methyltransferase superfamily. RKM5 family.

Its function is as follows. S-adenosyl-L-methionine-dependent protein-lysine N-methyltransferase that monomethylates 60S ribosomal protein L1 (RPL1A and RPL1B) at 'Lys-46'. This is Ribosomal lysine N-methyltransferase 5 (RKM5) from Saccharomyces cerevisiae (strain VIN 13) (Baker's yeast).